Here is a 206-residue protein sequence, read N- to C-terminus: tRNA (guanine-N(7)-)-methyltransferase (206 aa).

Residues glutamate 37, glutamate 62, aspartate 89, and aspartate 112 each coordinate S-adenosyl-L-methionine. Residue aspartate 112 is part of the active site. Substrate-binding residues include lysine 116 and aspartate 148.

Belongs to the class I-like SAM-binding methyltransferase superfamily. TrmB family.

It catalyses the reaction guanosine(46) in tRNA + S-adenosyl-L-methionine = N(7)-methylguanosine(46) in tRNA + S-adenosyl-L-homocysteine. It functions in the pathway tRNA modification; N(7)-methylguanine-tRNA biosynthesis. Catalyzes the formation of N(7)-methylguanine at position 46 (m7G46) in tRNA. This is tRNA (guanine-N(7)-)-methyltransferase from Myxococcus xanthus (strain DK1622).